Consider the following 276-residue polypeptide: Urease accessory protein UreD (276 aa).

Belongs to the UreD family. As to quaternary structure, ureD, UreF and UreG form a complex that acts as a GTP-hydrolysis-dependent molecular chaperone, activating the urease apoprotein by helping to assemble the nickel containing metallocenter of UreC. The UreE protein probably delivers the nickel.

The protein resides in the cytoplasm. Functionally, required for maturation of urease via the functional incorporation of the urease nickel metallocenter. This is Urease accessory protein UreD from Polaromonas naphthalenivorans (strain CJ2).